Consider the following 377-residue polypeptide: Ribosomal RNA large subunit methyltransferase G (377 aa).

It belongs to the methyltransferase superfamily. RlmG family.

The protein localises to the cytoplasm. It catalyses the reaction guanosine(1835) in 23S rRNA + S-adenosyl-L-methionine = N(2)-methylguanosine(1835) in 23S rRNA + S-adenosyl-L-homocysteine + H(+). In terms of biological role, specifically methylates the guanine in position 1835 (m2G1835) of 23S rRNA. The chain is Ribosomal RNA large subunit methyltransferase G from Shewanella sp. (strain MR-4).